Reading from the N-terminus, the 240-residue chain is MDVYGMSSPDLLRIDDLLDFSNDEIFSSSSTVTSSAASSAASSENPFSFPSSTYTSPTLLTDFTHDLCVPSDDAAHLEWLSRFVDDSFSDFPANPLTMTVRPEISFTGKPRSRRSRAPAPSVAGTWAPMSESELCHSVAKPKPKKVYNAESVTADGARRCTHCASEKTPQWRTGPLGPKTLCNACGVRYKSGRLVPEYRPASSPTFVLTQHSNSHRKVMELRRQKEQQESCVRIPPFQPQ.

The tract at residues 104–124 (ISFTGKPRSRRSRAPAPSVAG) is disordered. The Nuclear localization signal motif lies at 109 to 116 (KPRSRRSR). The segment at 154–208 (ADGARRCTHCASEKTPQWRTGPLGPKTLCNACGVRYKSGRLVPEYRPASSPTFVL) adopts a GATA-type zinc-finger fold.

It belongs to the type IV zinc-finger family. Class A subfamily. As to expression, expressed in roots, flowers and leaves, and to a lower extent in stems.

The protein localises to the nucleus. Its function is as follows. Transcriptional activator that specifically binds 5'-GATA-3' or 5'-GAT-3' motifs within gene promoters. May be involved in the regulation of some light-responsive genes. In Arabidopsis thaliana (Mouse-ear cress), this protein is GATA transcription factor 4 (GATA4).